Consider the following 138-residue polypeptide: Small ribosomal subunit protein uS11c (138 aa).

The tract at residues Met1–Arg23 is disordered. Basic residues predominate over residues Gly9–Arg23.

It belongs to the universal ribosomal protein uS11 family. Part of the 30S ribosomal subunit.

Its subcellular location is the plastid. It localises to the chloroplast. This chain is Small ribosomal subunit protein uS11c, found in Aethionema grandiflorum (Persian stone-cress).